Reading from the N-terminus, the 150-residue chain is Phosphoribosyl-AMP cyclohydrolase (150 aa).

Asp-93 is a binding site for Mg(2+). Cys-94 provides a ligand contact to Zn(2+). Asp-95 and Asp-97 together coordinate Mg(2+). Cys-112 and Cys-119 together coordinate Zn(2+).

It belongs to the PRA-CH family. In terms of assembly, homodimer. Requires Mg(2+) as cofactor. It depends on Zn(2+) as a cofactor.

The protein resides in the cytoplasm. The catalysed reaction is 1-(5-phospho-beta-D-ribosyl)-5'-AMP + H2O = 1-(5-phospho-beta-D-ribosyl)-5-[(5-phospho-beta-D-ribosylamino)methylideneamino]imidazole-4-carboxamide. Its pathway is amino-acid biosynthesis; L-histidine biosynthesis; L-histidine from 5-phospho-alpha-D-ribose 1-diphosphate: step 3/9. Functionally, catalyzes the hydrolysis of the adenine ring of phosphoribosyl-AMP. The sequence is that of Phosphoribosyl-AMP cyclohydrolase from Rhizobium etli (strain CIAT 652).